The primary structure comprises 261 residues: 1-(5-phosphoribosyl)-5-[(5-phosphoribosylamino)methylideneamino] imidazole-4-carboxamide isomerase (261 aa).

Asp7 acts as the Proton acceptor in catalysis. Asp129 (proton donor) is an active-site residue.

This sequence belongs to the HisA/HisF family.

It localises to the cytoplasm. The enzyme catalyses 1-(5-phospho-beta-D-ribosyl)-5-[(5-phospho-beta-D-ribosylamino)methylideneamino]imidazole-4-carboxamide = 5-[(5-phospho-1-deoxy-D-ribulos-1-ylimino)methylamino]-1-(5-phospho-beta-D-ribosyl)imidazole-4-carboxamide. It functions in the pathway amino-acid biosynthesis; L-histidine biosynthesis; L-histidine from 5-phospho-alpha-D-ribose 1-diphosphate: step 4/9. This Colwellia psychrerythraea (strain 34H / ATCC BAA-681) (Vibrio psychroerythus) protein is 1-(5-phosphoribosyl)-5-[(5-phosphoribosylamino)methylideneamino] imidazole-4-carboxamide isomerase.